A 440-amino-acid polypeptide reads, in one-letter code: Xylose isomerase (440 aa).

Catalysis depends on residues His101 and Asp104. Residues Glu232, Glu268, His271, Asp296, Asp307, Asp309, and Asp339 each coordinate Mg(2+).

It belongs to the xylose isomerase family. In terms of assembly, homotetramer. It depends on Mg(2+) as a cofactor.

It localises to the cytoplasm. It carries out the reaction alpha-D-xylose = alpha-D-xylulofuranose. In Salmonella typhi, this protein is Xylose isomerase.